We begin with the raw amino-acid sequence, 447 residues long: Tubulin beta-1 chain (447 aa).

The GTP site is built by Q11, E69, S138, G142, T143, G144, N204, and N226. E69 lines the Mg(2+) pocket. Positions 428–447 are disordered; that stretch reads ATADEDAEFDEEQEQEIEDN. Positions 429 to 447 are enriched in acidic residues; the sequence is TADEDAEFDEEQEQEIEDN.

It belongs to the tubulin family. As to quaternary structure, dimer of alpha and beta chains. A typical microtubule is a hollow water-filled tube with an outer diameter of 25 nm and an inner diameter of 15 nM. Alpha-beta heterodimers associate head-to-tail to form protofilaments running lengthwise along the microtubule wall with the beta-tubulin subunit facing the microtubule plus end conferring a structural polarity. Microtubules usually have 13 protofilaments but different protofilament numbers can be found in some organisms and specialized cells. Mg(2+) is required as a cofactor.

The protein localises to the cytoplasm. The protein resides in the cytoskeleton. In terms of biological role, tubulin is the major constituent of microtubules, a cylinder consisting of laterally associated linear protofilaments composed of alpha- and beta-tubulin heterodimers. Microtubules grow by the addition of GTP-tubulin dimers to the microtubule end, where a stabilizing cap forms. Below the cap, tubulin dimers are in GDP-bound state, owing to GTPase activity of alpha-tubulin. This is Tubulin beta-1 chain from Manduca sexta (Tobacco hawkmoth).